A 108-amino-acid polypeptide reads, in one-letter code: Glutaredoxin (108 aa).

The region spanning 3-103 is the Glutaredoxin domain; the sequence is LAKAKEIVSG…PLLTEAGAIA (101 aa). A disulfide bond links C23 and C26.

Belongs to the glutaredoxin family. CPYC subfamily.

It is found in the cytoplasm. Functionally, has a glutathione-disulfide oxidoreductase activity in the presence of NADPH and glutathione reductase. Reduces low molecular weight disulfides and proteins. The polypeptide is Glutaredoxin (Solanum lycopersicum (Tomato)).